A 340-amino-acid chain; its full sequence is Ketol-acid reductoisomerase (NADP(+)) (340 aa).

Residues 5–182 form the KARI N-terminal Rossmann domain; that stretch reads MEYEKDVKVA…GSARVGLLET (178 aa). NADP(+)-binding positions include 26–29, Arg49, Ser53, and 83–86; these read YGSQ and DEIQ. His108 is a catalytic residue. An NADP(+)-binding site is contributed by Gly134. The region spanning 183-328 is the KARI C-terminal knotted domain; it reads TYKEETEEDL…AELRKAMPFV (146 aa). Mg(2+) contacts are provided by Asp191, Glu195, Glu227, and Glu231. Ser252 provides a ligand contact to substrate.

Belongs to the ketol-acid reductoisomerase family. The cofactor is Mg(2+).

The enzyme catalyses (2R)-2,3-dihydroxy-3-methylbutanoate + NADP(+) = (2S)-2-acetolactate + NADPH + H(+). The catalysed reaction is (2R,3R)-2,3-dihydroxy-3-methylpentanoate + NADP(+) = (S)-2-ethyl-2-hydroxy-3-oxobutanoate + NADPH + H(+). It participates in amino-acid biosynthesis; L-isoleucine biosynthesis; L-isoleucine from 2-oxobutanoate: step 2/4. The protein operates within amino-acid biosynthesis; L-valine biosynthesis; L-valine from pyruvate: step 2/4. Its function is as follows. Involved in the biosynthesis of branched-chain amino acids (BCAA). Catalyzes an alkyl-migration followed by a ketol-acid reduction of (S)-2-acetolactate (S2AL) to yield (R)-2,3-dihydroxy-isovalerate. In the isomerase reaction, S2AL is rearranged via a Mg-dependent methyl migration to produce 3-hydroxy-3-methyl-2-ketobutyrate (HMKB). In the reductase reaction, this 2-ketoacid undergoes a metal-dependent reduction by NADPH to yield (R)-2,3-dihydroxy-isovalerate. This chain is Ketol-acid reductoisomerase (NADP(+)), found in Streptococcus sanguinis (strain SK36).